The primary structure comprises 536 residues: Prolyl 3-hydroxylase sudestada1 (536 aa).

The segment at 1 to 35 is disordered; the sequence is METSSSSPVKPRRKDKDEDGRAEQEDSADQVGEPH. Residues 14 to 24 show a composition bias toward basic and acidic residues; it reads KDKDEDGRAEQ. One can recognise a Fe2OG dioxygenase domain in the interval 165 to 275; the sequence is KLDYVSASCS…RLTINGWFHG (111 aa). Fe cation-binding residues include His185 and Asp187. Residue Tyr199 participates in 2-oxoglutarate binding. His254 lines the Fe cation pocket. 2-oxoglutarate is bound at residue Arg266. The interval 467-486 is disordered; sequence PTAKAPTDGRRSDYDDEEED.

It belongs to the TPA1 family. As to quaternary structure, monomer. Fe(2+) is required as a cofactor. L-ascorbate serves as cofactor. As to expression, in third-instar larval tissues,highly expressed in the fat body, with significant expression in other organs including the brain, salivary glands, imaginal disks and gut.

The protein resides in the nucleus. Its subcellular location is the cytoplasm. It catalyses the reaction [ribosomal protein uS12]-L-proline + 2-oxoglutarate + O2 = [ribosomal protein uS12]-(3S)-3-hydroxy-L-proline + succinate + CO2. Functionally, prolyl 3-hydroxylase that catalyzes 3-hydroxylation of 'Pro-62' of small ribosomal subunit uS12 (RpS23), thereby regulating protein translation termination efficiency. This Drosophila melanogaster (Fruit fly) protein is Prolyl 3-hydroxylase sudestada1 (sud1).